A 107-amino-acid chain; its full sequence is Nucleoid-associated protein CE0210 (107 aa).

The protein belongs to the YbaB/EbfC family. Homodimer.

The protein localises to the cytoplasm. Its subcellular location is the nucleoid. Binds to DNA and alters its conformation. May be involved in regulation of gene expression, nucleoid organization and DNA protection. This Corynebacterium efficiens (strain DSM 44549 / YS-314 / AJ 12310 / JCM 11189 / NBRC 100395) protein is Nucleoid-associated protein CE0210.